Here is a 152-residue protein sequence, read N- to C-terminus: Regulatory protein RecX (152 aa).

This sequence belongs to the RecX family.

The protein localises to the cytoplasm. Functionally, modulates RecA activity. The chain is Regulatory protein RecX from Haemophilus influenzae (strain PittEE).